A 406-amino-acid chain; its full sequence is Argininosuccinate synthase (406 aa).

ATP-binding positions include Ala10–Ser18 and Ala37. L-citrulline-binding residues include Tyr88 and Ser93. Residue Gly118 coordinates ATP. Thr120, Asn124, and Asp125 together coordinate L-aspartate. Asn124 provides a ligand contact to L-citrulline. Positions 128, 180, 189, 265, and 277 each coordinate L-citrulline.

This sequence belongs to the argininosuccinate synthase family. Type 1 subfamily. Homotetramer.

The protein resides in the cytoplasm. It catalyses the reaction L-citrulline + L-aspartate + ATP = 2-(N(omega)-L-arginino)succinate + AMP + diphosphate + H(+). Its pathway is amino-acid biosynthesis; L-arginine biosynthesis; L-arginine from L-ornithine and carbamoyl phosphate: step 2/3. In Methylobacillus flagellatus (strain ATCC 51484 / DSM 6875 / VKM B-1610 / KT), this protein is Argininosuccinate synthase.